We begin with the raw amino-acid sequence, 276 residues long: GPN-loop GTPase 3 (276 aa).

13–18 (SSGKST) lines the GTP pocket. The short motif at 70-72 (GPN) is the Gly-Pro-Asn (GPN)-loop; involved in dimer interface element. 173–176 (SKMD) is a binding site for GTP. The segment at 257–276 (EDQEPKDPDRFEADDLEDDE) is disordered. Over residues 259 to 269 (QEPKDPDRFEA) the composition is skewed to basic and acidic residues.

The protein belongs to the GPN-loop GTPase family. Heterodimers with gpn1 or gpn2. Binds to RNA polymerase II (RNAPII).

The protein localises to the cytoplasm. It is found in the nucleus. Small GTPase required for proper nuclear import of RNA polymerase II and III (RNAPII and RNAPIII). May act at an RNAP assembly step prior to nuclear import. This Schizosaccharomyces pombe (strain 972 / ATCC 24843) (Fission yeast) protein is GPN-loop GTPase 3.